The primary structure comprises 248 residues: MRKKVIFGNWKMNGTNKSLEDFLYQVDNKVNNSKITAGLAVPYVMLQTGIKLAKNVKIAAQNVHFELKGAYTGEISVSMLKEIGVEYVIIGHSERREMFFETDLDINKKAKILLENNMIPIICCGESLETKEQGKTIEFVNNQINLIYQNISKQDAIKTIIAYEPIWAIGTGKTANSLDAEEVCKKIRENLAKIYDNLTAEKITIQYGGSVKPSNIQEYLKMPNIDGALVGGASLLANDYLGLVNYNE.

Asparagine 9–lysine 11 contributes to the substrate binding site. Histidine 92 serves as the catalytic Electrophile. Glutamate 164 serves as the catalytic Proton acceptor. Substrate contacts are provided by residues glycine 170, serine 210, and glycine 231–glycine 232.

This sequence belongs to the triosephosphate isomerase family. Homodimer.

It is found in the cytoplasm. The enzyme catalyses D-glyceraldehyde 3-phosphate = dihydroxyacetone phosphate. It participates in carbohydrate biosynthesis; gluconeogenesis. It functions in the pathway carbohydrate degradation; glycolysis; D-glyceraldehyde 3-phosphate from glycerone phosphate: step 1/1. Involved in the gluconeogenesis. Catalyzes stereospecifically the conversion of dihydroxyacetone phosphate (DHAP) to D-glyceraldehyde-3-phosphate (G3P). The protein is Triosephosphate isomerase of Mycoplasma capricolum subsp. capricolum (strain California kid / ATCC 27343 / NCTC 10154).